The following is a 1396-amino-acid chain: MFREGSRDDAALVKEGLFDKLEIGIASDVTIRDKWSCGEIKKPETINYRTFKPEKGGLFCEKIFGPTKDWECYCGKYKKIKHKGIVCDRCGVEVTLSKVRRERMAHIELAVPIVHIWFFKTTPSRIGNVLGMTASDLERVIYYEEYVVIDPGNTDLVKKQLLNDAKYREVVEKWGKDAFVAKMGGEAVYDLLKSEDLESLLGELKDRLRKTKSQQARMKLAKRLKIVEGFVSSSNRPEWMVLKNIPVVPPDLRPLVPLDGGRFATSDLNDLYRRVINRNNRLKAILRLKTPEVIVRNEKRMLQEAVDALFDNGRHGHPVMGAGNRPLKSLSEMLKGKNGRFRQNLLGKRVDYSGRSVIIVGPELKFNQCGLPKEMALELFEPFIIKRLKDQGSVYTIRSAKKMIQRGAPEVWDVLEEIIKGHPVLLNRAPTLHRLGIQAFEPVLIEGKAIRVHPLVCAAFNADFDGDQMAVHVPLSIEAQLEAKVLMMAPDNIFLPSSGKPVATPSKDMTLGIYYLMADPTYFPEEHGGKTKAFKDEVEVLRALNAGGFILKDEICGSRRDETGRGIHIHEKIKVRIDGQIIETTPGRVFFNTIVPKELGFQNYSMPSKRISELILQCYKKVGLEATVRFLDDLKELGFVQSTKAAISMGLKDVKIPEIKKEILKDAYDKVAIVKKQYEDGIITDGERHSKTISIWTEVSDLLSNALYSEIKKQTNSKHNPLFLMVDSGARGNKSQLKQLGALRGLMAKPNGAIIESPITSNFREGLTVLEYSISSHGARKGLADTALKTADSGYLTRRLVDVAQDVIITERDCGTLNHIEVSTIRQGSEELLPLKDRVYGRTVSENIYQPGDKSNVLAYAGDVLTSAQAEAIDDAGIESVKIRSTLTCESRRGVCAKCYGLNLANGHLIGLGEAVGIIAAQSIGEPGTQLTMRTFHLGGVAATSSTPEIVAECDGILVYLDLRVVVDQEGNNLVLNKMGALHLVQDEGRSLSEYKKLLSTKSIESLATFPVELGAKILVNDGAAVTAGQRIAEVELHNIPIICDKPGFVHYEDLVEGVSTEKVANKNTGLVELIVKQHRGELHPQIAIYADANMKELVGTYAIPSGAIISVEEGQRIAPGMLLARLPRGAIKTKDITGGLPRVAELVEARKPEDAADIAKIDGVVDFKGIQKNKRILVVRDEITGMEEEHLISLTKHLIVQRGDSVIKGQQLTDGLVVPHEILAICGVRELQKYLVNEVQEVYRLQGVDINDKHIEIIVRQMLQKVRITDPGDTTLLFGEDVDKKEFYEENRRTEEDGGKPAQAVPVLLGITKASLGTESFISAASFQDTTRVLTDAACSSKTDYLLGFKENVIMGHMIPGGTGFDTHKRIKQYLEKEQEDLVFDFDSEFESVAG.

Residues Cys72, Cys74, Cys87, and Cys90 each contribute to the Zn(2+) site. Mg(2+) contacts are provided by Asp463, Asp465, and Asp467. Zn(2+)-binding residues include Cys814, Cys889, Cys896, and Cys899.

It belongs to the RNA polymerase beta' chain family. The RNAP catalytic core consists of 2 alpha, 1 beta, 1 beta' and 1 omega subunit. When a sigma factor is associated with the core the holoenzyme is formed, which can initiate transcription. The cofactor is Mg(2+). It depends on Zn(2+) as a cofactor.

The catalysed reaction is RNA(n) + a ribonucleoside 5'-triphosphate = RNA(n+1) + diphosphate. DNA-dependent RNA polymerase catalyzes the transcription of DNA into RNA using the four ribonucleoside triphosphates as substrates. The sequence is that of DNA-directed RNA polymerase subunit beta' from Chlamydia trachomatis serovar L2b (strain UCH-1/proctitis).